The sequence spans 449 residues: Bifunctional protein GlmU (449 aa).

The pyrophosphorylase stretch occupies residues 1-225 (MLSVAILAAG…NGELQGINNR (225 aa)). UDP-N-acetyl-alpha-D-glucosamine-binding positions include 7–10 (LAAG), Lys-21, Gln-73, and 78–79 (GT). Asp-103 contributes to the Mg(2+) binding site. Positions 140, 154, 169, and 223 each coordinate UDP-N-acetyl-alpha-D-glucosamine. Asn-223 is a binding site for Mg(2+). Residues 226–246 (IQLSKCEEIIQNSIKEKHMLN) are linker. Positions 247 to 449 (GVTFINQASC…NIDNWERKKP (203 aa)) are N-acetyltransferase. UDP-N-acetyl-alpha-D-glucosamine is bound by residues Arg-328 and Lys-346. His-358 (proton acceptor) is an active-site residue. Tyr-361 and Asn-372 together coordinate UDP-N-acetyl-alpha-D-glucosamine. Acetyl-CoA-binding residues include Ala-375, Ala-418, and Arg-435.

This sequence in the N-terminal section; belongs to the N-acetylglucosamine-1-phosphate uridyltransferase family. It in the C-terminal section; belongs to the transferase hexapeptide repeat family. Homotrimer. It depends on Mg(2+) as a cofactor.

Its subcellular location is the cytoplasm. The enzyme catalyses alpha-D-glucosamine 1-phosphate + acetyl-CoA = N-acetyl-alpha-D-glucosamine 1-phosphate + CoA + H(+). It catalyses the reaction N-acetyl-alpha-D-glucosamine 1-phosphate + UTP + H(+) = UDP-N-acetyl-alpha-D-glucosamine + diphosphate. Its pathway is nucleotide-sugar biosynthesis; UDP-N-acetyl-alpha-D-glucosamine biosynthesis; N-acetyl-alpha-D-glucosamine 1-phosphate from alpha-D-glucosamine 6-phosphate (route II): step 2/2. It functions in the pathway nucleotide-sugar biosynthesis; UDP-N-acetyl-alpha-D-glucosamine biosynthesis; UDP-N-acetyl-alpha-D-glucosamine from N-acetyl-alpha-D-glucosamine 1-phosphate: step 1/1. The protein operates within bacterial outer membrane biogenesis; LPS lipid A biosynthesis. Its function is as follows. Catalyzes the last two sequential reactions in the de novo biosynthetic pathway for UDP-N-acetylglucosamine (UDP-GlcNAc). The C-terminal domain catalyzes the transfer of acetyl group from acetyl coenzyme A to glucosamine-1-phosphate (GlcN-1-P) to produce N-acetylglucosamine-1-phosphate (GlcNAc-1-P), which is converted into UDP-GlcNAc by the transfer of uridine 5-monophosphate (from uridine 5-triphosphate), a reaction catalyzed by the N-terminal domain. In Prochlorococcus marinus (strain MIT 9312), this protein is Bifunctional protein GlmU.